The primary structure comprises 154 residues: 6,7-dimethyl-8-ribityllumazine synthase (154 aa).

5-amino-6-(D-ribitylamino)uracil-binding positions include Phe22, 56-58 (AFE), and 80-82 (AVI). 85 to 86 (AT) contacts (2S)-2-hydroxy-3-oxobutyl phosphate. His88 (proton donor) is an active-site residue. Phe113 provides a ligand contact to 5-amino-6-(D-ribitylamino)uracil. A (2S)-2-hydroxy-3-oxobutyl phosphate-binding site is contributed by Arg127.

The protein belongs to the DMRL synthase family.

It catalyses the reaction (2S)-2-hydroxy-3-oxobutyl phosphate + 5-amino-6-(D-ribitylamino)uracil = 6,7-dimethyl-8-(1-D-ribityl)lumazine + phosphate + 2 H2O + H(+). Its pathway is cofactor biosynthesis; riboflavin biosynthesis; riboflavin from 2-hydroxy-3-oxobutyl phosphate and 5-amino-6-(D-ribitylamino)uracil: step 1/2. Functionally, catalyzes the formation of 6,7-dimethyl-8-ribityllumazine by condensation of 5-amino-6-(D-ribitylamino)uracil with 3,4-dihydroxy-2-butanone 4-phosphate. This is the penultimate step in the biosynthesis of riboflavin. The sequence is that of 6,7-dimethyl-8-ribityllumazine synthase from Clostridium botulinum (strain 657 / Type Ba4).